Consider the following 225-residue polypeptide: Phosphatidylserine decarboxylase proenzyme (225 aa).

Ser-195 serves as the catalytic Schiff-base intermediate with substrate; via pyruvic acid. Pyruvic acid (Ser); by autocatalysis is present on Ser-195.

It belongs to the phosphatidylserine decarboxylase family. PSD-A subfamily. In terms of assembly, heterodimer of a large membrane-associated beta subunit and a small pyruvoyl-containing alpha subunit. It depends on pyruvate as a cofactor. Post-translationally, is synthesized initially as an inactive proenzyme. Formation of the active enzyme involves a self-maturation process in which the active site pyruvoyl group is generated from an internal serine residue via an autocatalytic post-translational modification. Two non-identical subunits are generated from the proenzyme in this reaction, and the pyruvate is formed at the N-terminus of the alpha chain, which is derived from the carboxyl end of the proenzyme. The post-translation cleavage follows an unusual pathway, termed non-hydrolytic serinolysis, in which the side chain hydroxyl group of the serine supplies its oxygen atom to form the C-terminus of the beta chain, while the remainder of the serine residue undergoes an oxidative deamination to produce ammonia and the pyruvoyl prosthetic group on the alpha chain.

The protein resides in the cell membrane. The enzyme catalyses a 1,2-diacyl-sn-glycero-3-phospho-L-serine + H(+) = a 1,2-diacyl-sn-glycero-3-phosphoethanolamine + CO2. It functions in the pathway phospholipid metabolism; phosphatidylethanolamine biosynthesis; phosphatidylethanolamine from CDP-diacylglycerol: step 2/2. Its function is as follows. Catalyzes the formation of phosphatidylethanolamine (PtdEtn) from phosphatidylserine (PtdSer). This Gluconobacter oxydans (strain 621H) (Gluconobacter suboxydans) protein is Phosphatidylserine decarboxylase proenzyme.